A 244-amino-acid polypeptide reads, in one-letter code: uncharacterized protein (244 aa).

Positions V7–F74 constitute an HTH gntR-type domain. Positions R34 to V53 form a DNA-binding region, H-T-H motif.

This is an uncharacterized protein from Mycobacterium tuberculosis (strain CDC 1551 / Oshkosh).